Reading from the N-terminus, the 105-residue chain is Large ribosomal subunit protein bL21 (105 aa).

It belongs to the bacterial ribosomal protein bL21 family. Part of the 50S ribosomal subunit. Contacts protein L20.

In terms of biological role, this protein binds to 23S rRNA in the presence of protein L20. The protein is Large ribosomal subunit protein bL21 of Dictyoglomus thermophilum (strain ATCC 35947 / DSM 3960 / H-6-12).